The following is a 129-amino-acid chain: MKCTLRWTITALVLLGICHLARPAYHKKCGRYSYCWIPYDIERDRRDNGGKKCCFCRNAWSPWQCKEDERYEWLRCGHKFYYMCCYTDDDNGNGDGNGNGFNYLKSLYGGYGNGNGEFWEEYIDERYDK.

An N-terminal signal peptide occupies residues 1–23 (MKCTLRWTITALVLLGICHLARP). A run of 5 repeats spans residues 91–92 (NG), 93–94 (NG), 95–96 (DG), 97–98 (NG), and 99–100 (NG). A 5 X 2 AA tandem repeats of N-G region spans residues 91–100 (NGNGDGNGNG).

It belongs to the N16 matrix protein family. Heterooligomer; disulfide-linked. Pif97, Pif80, N16 and other proteins form a complex. Component of conchiolin, the organic matrix of nacre. Expressed at extremely high levels in the dorsal region of the mantle, which region may be responsible for the nacreous layer formation, but only in trace amounts at the mantle edge, which region may be responsible for the prismatic layer formation.

The protein localises to the secreted. It is found in the extracellular space. It localises to the extracellular matrix. In terms of biological role, may be specifically involved in the formation of the nacreous layer. This chain is N16.2 matrix protein, found in Pinctada fucata (Akoya pearl oyster).